We begin with the raw amino-acid sequence, 256 residues long: MNNIWWHTKGQGNVHLVLLHGWGLNAGVWRCIDEELSSHFTLHLVDLPGFGRSRGFGALSLADMAEVVLRQAPDKAIWLGWSLGGLVASQIALTHPERVQALVTVASSPCFSARDEWPGIKPDVLAGFQQQLSDDFQRTVERFLALQTMGTETARQDARALKKTVLALPMPEVDVLNGGLEILKTVDLRQPLQNVPMPFLRLYGYLDGLVPRKVVPMLDKLWPHSESYIFAKAAHAPFISHPDEFCHLLVALKQRV.

An AB hydrolase-1 domain is found at 15–242 (HLVLLHGWGL…AAHAPFISHP (228 aa)). Residues Trp22, 82-83 (SL), and 143-147 (FLALQ) contribute to the substrate site. Ser82 serves as the catalytic Nucleophile. Catalysis depends on residues Asp207 and His235. Residue His235 coordinates substrate.

The protein belongs to the AB hydrolase superfamily. Carboxylesterase BioH family. As to quaternary structure, monomer.

It localises to the cytoplasm. It catalyses the reaction 6-carboxyhexanoyl-[ACP] methyl ester + H2O = 6-carboxyhexanoyl-[ACP] + methanol + H(+). The protein operates within cofactor biosynthesis; biotin biosynthesis. The physiological role of BioH is to remove the methyl group introduced by BioC when the pimeloyl moiety is complete. It allows to synthesize pimeloyl-ACP via the fatty acid synthetic pathway through the hydrolysis of the ester bonds of pimeloyl-ACP esters. In Escherichia coli O81 (strain ED1a), this protein is Pimeloyl-[acyl-carrier protein] methyl ester esterase.